The sequence spans 206 residues: ATP-dependent Clp protease proteolytic subunit 1 (206 aa).

Serine 106 (nucleophile) is an active-site residue. The active site involves histidine 131.

Belongs to the peptidase S14 family. As to quaternary structure, fourteen ClpP subunits assemble into 2 heptameric rings which stack back to back to give a disk-like structure with a central cavity, resembling the structure of eukaryotic proteasomes.

It is found in the cytoplasm. The enzyme catalyses Hydrolysis of proteins to small peptides in the presence of ATP and magnesium. alpha-casein is the usual test substrate. In the absence of ATP, only oligopeptides shorter than five residues are hydrolyzed (such as succinyl-Leu-Tyr-|-NHMec, and Leu-Tyr-Leu-|-Tyr-Trp, in which cleavage of the -Tyr-|-Leu- and -Tyr-|-Trp bonds also occurs).. Its function is as follows. Cleaves peptides in various proteins in a process that requires ATP hydrolysis. Has a chymotrypsin-like activity. Plays a major role in the degradation of misfolded proteins. In Methylococcus capsulatus (strain ATCC 33009 / NCIMB 11132 / Bath), this protein is ATP-dependent Clp protease proteolytic subunit 1.